The chain runs to 87 residues: U24 protein (87 aa).

Thr6 is subject to Phosphothreonine. Residues 8–11 (PPSY) carry the PPXY motif motif. Residues 59 to 79 (FLVLTGLAIAMILFIVFVLYV) traverse the membrane as a helical segment.

In terms of assembly, interacts with host ITCH; this interaction probably mediates ITCH degradation. Interacts probably with NEDD4.

It is found in the membrane. In terms of biological role, down-regulates the TCR/CD3E complex and the transferrin receptor TFRC in host T-cells by blocking them from recycling back to the cell surface. The chain is U24 protein (U24) from Homo sapiens (Human).